A 375-amino-acid polypeptide reads, in one-letter code: tRNA-specific 2-thiouridylase MnmA (375 aa).

ATP contacts are provided by residues 16 to 23 and Met42; that span reads GMSGGVDS. The segment at 102-104 is interaction with target base in tRNA; that stretch reads NPD. Catalysis depends on Cys107, which acts as the Nucleophile. Cys107 and Cys203 are oxidised to a cystine. Gly131 is an ATP binding site. Residues 153–155 are interaction with tRNA; sequence KDQ. Cys203 acts as the Cysteine persulfide intermediate in catalysis. The interval 315-316 is interaction with tRNA; the sequence is RY.

The protein belongs to the MnmA/TRMU family.

It localises to the cytoplasm. The catalysed reaction is S-sulfanyl-L-cysteinyl-[protein] + uridine(34) in tRNA + AH2 + ATP = 2-thiouridine(34) in tRNA + L-cysteinyl-[protein] + A + AMP + diphosphate + H(+). Functionally, catalyzes the 2-thiolation of uridine at the wobble position (U34) of tRNA, leading to the formation of s(2)U34. In Pseudomonas aeruginosa (strain LESB58), this protein is tRNA-specific 2-thiouridylase MnmA.